Consider the following 620-residue polypeptide: Glutathione-regulated potassium-efflux system protein KefC (620 aa).

The next 12 membrane-spanning stretches (helical) occupy residues 4–24 (HTLV…PIAV), 26–46 (LGLG…PWGL), 54–74 (SILH…GLEL), 90–110 (GALQ…LLGL), 114–134 (VAEL…MQAM), 149–169 (FAVL…IPLL), 178–198 (MGAF…VVLL), 218–238 (VFSA…EEVG), 270–290 (GLLL…GTLL), 294–314 (LRIV…LWLI), 327–347 (WFAV…GAAQ), and 359–379 (SLTL…VILN). The RCK N-terminal domain maps to 399–518 (QPRVIIAGFG…AGVEKPERET (120 aa)). The interval 597-620 (GWQGTEEGKHTGNMADEPETKPSS) is disordered.

This sequence belongs to the monovalent cation:proton antiporter 2 (CPA2) transporter (TC 2.A.37) family. KefC subfamily. As to quaternary structure, homodimer. Interacts with the regulatory subunit KefF.

It is found in the cell inner membrane. Pore-forming subunit of a potassium efflux system that confers protection against electrophiles. Catalyzes K(+)/H(+) antiport. In Escherichia coli O139:H28 (strain E24377A / ETEC), this protein is Glutathione-regulated potassium-efflux system protein KefC.